We begin with the raw amino-acid sequence, 335 residues long: UPF0353 protein MT1528 (335 aa).

The next 2 helical transmembrane spans lie at 18 to 38 (WFFLFLFVVAGLVALYILMQL) and 67 to 87 (VPAILLVLSLLLFTIAMAGPT). The VWFA domain maps to 98–294 (VVMLVIDVSQ…AELRAVYSSL (197 aa)). A helical membrane pass occupies residues 309–329 (VGWLRLGALALALAALAALLI).

Belongs to the UPF0353 family.

The protein resides in the cell membrane. This Mycobacterium tuberculosis (strain CDC 1551 / Oshkosh) protein is UPF0353 protein MT1528.